The following is a 607-amino-acid chain: Phosphomethylpyrimidine synthase (607 aa).

Residues Asn-216, Met-245, Tyr-274, His-310, 330–332 (SRG), 371–374 (DGLR), and Glu-410 contribute to the substrate site. His-414 contributes to the Zn(2+) binding site. Substrate is bound at residue Tyr-437. His-478 lines the Zn(2+) pocket. 3 residues coordinate [4Fe-4S] cluster: Cys-558, Cys-561, and Cys-566.

It belongs to the ThiC family. In terms of assembly, homodimer. Requires [4Fe-4S] cluster as cofactor.

It carries out the reaction 5-amino-1-(5-phospho-beta-D-ribosyl)imidazole + S-adenosyl-L-methionine = 4-amino-2-methyl-5-(phosphooxymethyl)pyrimidine + CO + 5'-deoxyadenosine + formate + L-methionine + 3 H(+). It functions in the pathway cofactor biosynthesis; thiamine diphosphate biosynthesis. In terms of biological role, catalyzes the synthesis of the hydroxymethylpyrimidine phosphate (HMP-P) moiety of thiamine from aminoimidazole ribotide (AIR) in a radical S-adenosyl-L-methionine (SAM)-dependent reaction. The polypeptide is Phosphomethylpyrimidine synthase (Agrobacterium fabrum (strain C58 / ATCC 33970) (Agrobacterium tumefaciens (strain C58))).